We begin with the raw amino-acid sequence, 4699 residues long: PKS-NRPS hybrid synthetase cheA (4699 aa).

The span at 1-21 (MSDNDDEWNGFSDDNGEDDGP) shows a compositional bias: acidic residues. Disordered stretches follow at residues 1 to 38 (MSDN…WDVP) and 136 to 165 (DGWR…HTQH). Residues 136–148 (DGWRFHSHPDPQH) show a composition bias toward basic and acidic residues. The tract at residues 172–520 (SLDTIAELSN…VQQNVEEMAK (349 aa)) is N-terminal acylcarrier protein transacylase domain (SAT). The segment at 625-836 (PLPSVEDNVA…AGAPGARVTR (212 aa)) is disordered. Residues 674–688 (TQGSQGSQGRRTPGS) are compositionally biased toward low complexity. The span at 724–737 (PKRRGRPPGSKNKK) shows a compositional bias: basic residues. In terms of domain architecture, Ketosynthase family 3 (KS3) spans 737–1138 (KKDQAPAPAE…GANAHAILEA (402 aa)). A compositionally biased stretch (low complexity) spans 764–777 (ASAPRRGLRAAPAA). A compositionally biased stretch (polar residues) spans 802–816 (ATASTPRAQSDQGTG). Residues cysteine 873, histidine 1012, and histidine 1058 each act as for beta-ketoacyl synthase activity in the active site. A malonyl-CoA:ACP transacylase (MAT) domain region spans residues 1250–1573 (VFTGQGAQWP…VGTLLRQRDA (324 aa)). The tract at residues 1644-1777 (NELLGTRIMD…ANLIISLGEP (134 aa)) is N-terminal hotdog fold. The PKS/mFAS DH domain occupies 1644-1947 (NELLGTRIMD…TKPLVPPTPS (304 aa)). Positions 1645 to 1941 (ELLGTRIMDN…QLQGLHTKPL (297 aa)) are dehydratase (DH) domain. The active-site Proton acceptor; for dehydratase activity is the histidine 1676. The segment at 1794-1947 (MLDVPAERFY…TKPLVPPTPS (154 aa)) is C-terminal hotdog fold. The active-site Proton donor; for dehydratase activity is the aspartate 1854. A methyltransferase (MT) domain region spans residues 2050-2241 (LNRFYIEALG…RNTGFSGADE (192 aa)). The tract at residues 2794-2967 (TYWLVGLTGG…PAAAVNIGAV (174 aa)) is ketoreductase (KR) domain. The 78-residue stretch at 3076–3153 (DASEILEDAY…ALFELVKERA (78 aa)) folds into the Carrier 1 domain. The residue at position 3113 (serine 3113) is an O-(pantetheine 4'-phosphoryl)serine. Positions 3164–3265 (EQPDQVKSPR…PVASSPDAGL (102 aa)) are disordered. Composition is skewed to polar residues over residues 3200 to 3209 (SLDQGSSWDS) and 3218 to 3233 (GHDS…SSPI). Positions 3268–3696 (SVPLSFSQAR…PISRISKPPL (429 aa)) are condensation (C) domain. Residues 3730–4113 (IQAHPDKLAL…GGLILEGRID (384 aa)) form an adenylation (A) domain region. The 81-residue stretch at 4236-4316 (EGLPAMQHLI…TMAALVASGS (81 aa)) folds into the Carrier 2 domain. The thiolation and peptide carrier (T) domain stretch occupies residues 4241–4313 (MQHLIKQLWE…TLETMAALVA (73 aa)). Position 4276 is an O-(pantetheine 4'-phosphoryl)serine (serine 4276). The tract at residues 4367 to 4598 (LTGSTGFLGR…ISVHTVAAAI (232 aa)) is reductase (R) domain.

It in the C-terminal section; belongs to the NRP synthetase family.

It functions in the pathway secondary metabolite biosynthesis. Functionally, PKS-NRPS hybrid synthetase; part of the gene cluster that mediates the biosynthesis of chaetoglobosin A which has a unique inhibitory activity against actin polymerization in mammalian cells. Chaetoglobosin A and its intermediates are involved in the morphological differentiation of C.globosum. The first step of the pathway is the synthesis of prochaetoglobosin I via condensation of one acetyl-CoA, 8 malonyl-CoA, and a L-tryptophan molecule by the PKS-NRPS hybrid synthetase cheA, followed by reduction of backbone double bond to install desired geometry by the enoyl reductase cheB. Further multiple oxidation steps performed by the cytochrome P450 monooxygenases cheE and cheG, as well as by the FAD-linked oxidoreductase cheF, lead to the formation of chaetoglobosin A. Depending on the order of action of these reductases, distinct intermediates can be identified. Within the pathway, the cytochrome P450 monooxygenase cheE catalyzes a stereospecific epoxidation on prochaetoglobosin I, cytoglobosin D, and chaetoglobosin J intermediates. The FAD-linked oxidoreductase cheF performs dehydrogenation of the C-20 hydroxyl groups in the 20-dihyrochaetoglobosin A and cytoglobosin D intermediates. Finally, the cytochrome P450 monooxygenase cheG can catalyze the stereospecific dihydroxylation of prochaetoglobosin I and prochaetoglobosin IV at C-19 and C-20, respectively. The Diels-Alderase cheD may play a role in the post-PKS-NRPS biosynthetic steps catalyzing Diels-Alder cyclization. The protein is PKS-NRPS hybrid synthetase cheA of Chaetomium globosum (strain ATCC 6205 / CBS 148.51 / DSM 1962 / NBRC 6347 / NRRL 1970) (Soil fungus).